A 503-amino-acid polypeptide reads, in one-letter code: Na(+)-translocating NADH-quinone reductase subunit B (503 aa).

4 consecutive transmembrane segments (helical) span residues 55–75 (MMLVVIALFPATFLAIWNSGI), 120–140 (IFLPLLIISYTVGGACEVLFA), 161–181 (TLPPTIPYWMAALGIAFGVVV), and 186–206 (FGGTGMNILNPALSGRAFLFF). The residue at position 248 (threonine 248) is an FMN phosphoryl threonine. 5 helical membrane passes run 361–381 (TSTFACLLGAVFLVITGIASW), 387–407 (FGIGAFVTAWLFKICSILIAG), 417–437 (FFIPAYRQLFLGGLAFGLVFM), 452–472 (WIYGLFIGFMTIIIRLINPAY), and 475–495 (GVMLAILLGNVFAPLLDYFAV).

The protein belongs to the NqrB/RnfD family. As to quaternary structure, composed of six subunits; NqrA, NqrB, NqrC, NqrD, NqrE and NqrF. The cofactor is FMN.

It is found in the cell inner membrane. It catalyses the reaction a ubiquinone + n Na(+)(in) + NADH + H(+) = a ubiquinol + n Na(+)(out) + NAD(+). NQR complex catalyzes the reduction of ubiquinone-1 to ubiquinol by two successive reactions, coupled with the transport of Na(+) ions from the cytoplasm to the periplasm. NqrA to NqrE are probably involved in the second step, the conversion of ubisemiquinone to ubiquinol. This is Na(+)-translocating NADH-quinone reductase subunit B from Chlamydia abortus (strain DSM 27085 / S26/3) (Chlamydophila abortus).